The primary structure comprises 349 residues: uncharacterized protein (349 aa).

The N-terminal stretch at 1–29 (MKQKYENYFKKRLILNLLIFLLLACSSES) is a signal peptide.

This is an uncharacterized protein from Borreliella burgdorferi (strain ATCC 35210 / DSM 4680 / CIP 102532 / B31) (Borrelia burgdorferi).